A 93-amino-acid polypeptide reads, in one-letter code: DNA-directed RNA polymerase subunit omega (93 aa).

This sequence belongs to the RNA polymerase subunit omega family. As to quaternary structure, the RNAP catalytic core consists of 2 alpha, 1 beta, 1 beta' and 1 omega subunit. When a sigma factor is associated with the core the holoenzyme is formed, which can initiate transcription.

It catalyses the reaction RNA(n) + a ribonucleoside 5'-triphosphate = RNA(n+1) + diphosphate. Promotes RNA polymerase assembly. Latches the N- and C-terminal regions of the beta' subunit thereby facilitating its interaction with the beta and alpha subunits. This is DNA-directed RNA polymerase subunit omega from Acinetobacter baylyi (strain ATCC 33305 / BD413 / ADP1).